The sequence spans 159 residues: Abscisic acid and environmental stress-inducible protein (159 aa).

6 tandem repeats follow at residues 38–49 (GGGYNHGGGGYN), 50–61 (GGGYNHGGGGYN), 63–74 (GGGYNHGGGGYN), 77–88 (GGGYNHGGGGYN), 91–102 (GGGYNHGGGGYN), and 105–116 (GGGYNHGGGGYN). The segment at 38 to 135 (GGGYNHGGGG…GYNHGGGGCQ (98 aa)) is 7 X 12 AA repeats of G-G-G-Y-N-H-G-G-G-Y-N. Residues 124–135 (GGGYNHGGGGCQ) form a 7; approximate repeat.

The protein belongs to the GRP family.

The chain is Abscisic acid and environmental stress-inducible protein from Medicago sativa subsp. falcata (Sickle medic).